Consider the following 98-residue polypeptide: Aspartyl/glutamyl-tRNA(Asn/Gln) amidotransferase subunit C (98 aa).

Belongs to the GatC family. As to quaternary structure, heterotrimer of A, B and C subunits.

The catalysed reaction is L-glutamyl-tRNA(Gln) + L-glutamine + ATP + H2O = L-glutaminyl-tRNA(Gln) + L-glutamate + ADP + phosphate + H(+). It carries out the reaction L-aspartyl-tRNA(Asn) + L-glutamine + ATP + H2O = L-asparaginyl-tRNA(Asn) + L-glutamate + ADP + phosphate + 2 H(+). Allows the formation of correctly charged Asn-tRNA(Asn) or Gln-tRNA(Gln) through the transamidation of misacylated Asp-tRNA(Asn) or Glu-tRNA(Gln) in organisms which lack either or both of asparaginyl-tRNA or glutaminyl-tRNA synthetases. The reaction takes place in the presence of glutamine and ATP through an activated phospho-Asp-tRNA(Asn) or phospho-Glu-tRNA(Gln). This Gloeothece citriformis (strain PCC 7424) (Cyanothece sp. (strain PCC 7424)) protein is Aspartyl/glutamyl-tRNA(Asn/Gln) amidotransferase subunit C.